The sequence spans 642 residues: ATP-dependent rRNA helicase spb4 (642 aa).

The short motif at 14-42 (WDGVTPALSEWVLDAVASMGFTRMTPVQA) is the Q motif element. Residues 45-250 (IPLFMAHKDV…RVGLRNPVKV (206 aa)) enclose the Helicase ATP-binding domain. ATP is bound at residue 58–65 (AVTGSGKT). The DEAD box motif lies at 198–201 (DEAD). Positions 284–438 (AIKHILYSLE…TLTITDADAA (155 aa)) constitute a Helicase C-terminal domain. Positions 522–625 (AYKDKQREKR…RLLRRAAKDK (104 aa)) form a coiled coil. Basic and acidic residues-rich tracts occupy residues 527–536 (QREKRRKEQV) and 577–628 (AKQA…KESK). The interval 527–642 (QREKRRKEQV…DDDDEFKGFD (116 aa)) is disordered. A compositionally biased stretch (acidic residues) spans 632–642 (GDDDDEFKGFD).

It belongs to the DEAD box helicase family. DDX55/SPB4 subfamily. Component of pre-60S ribosomal complexes.

The protein resides in the nucleus. It localises to the nucleolus. It catalyses the reaction ATP + H2O = ADP + phosphate + H(+). Functionally, ATP-binding RNA helicase involved in the biogenesis of 60S ribosomal subunits. Binds 90S pre-ribosomal particles and dissociates from pre-60S ribosomal particles after processing of 27SB pre-rRNA. Required for the normal formation of 18S rRNA through the processing of pre-rRNAs at sites A0, A1 and A2, and the normal formation of 25S and 5.8S rRNAs through the processing of pre-rRNAs at sites C1 and C2. In Aspergillus niger (strain ATCC MYA-4892 / CBS 513.88 / FGSC A1513), this protein is ATP-dependent rRNA helicase spb4.